We begin with the raw amino-acid sequence, 431 residues long: MKNYIEIVDVYARQILDSRCNPTVEVEVELEDGTVGVAAVPSGASTGAFEAVELRDGDKSQYLGKGVLKAVDNVNTTIADELVGMNVLDQVAIDKTMIELDGTDNKAKLGANAMLGVSLACAKAAANSLGMSLYQYIGGVNGKVLPVPMMNIINGGKHADNNVDLQEFMIMPAGAPSFSEALRMCSEVYHALKSTLKAQGYDTGVGDEGGFAPNLKSNEEAIVVIIEAIKKAGYTPGKDIFIALDPASSEIFEDGKYNLAGEGRVLTPEEMANYYVELAEKYPIISIEDGMAEEDWDGWKILTEKIGNKVQLVGDDLFVTNTERLSKGIKLGVANSILIKLNQIGTLTETLNAIEMAERAGYTAVVSHRSGETEDTTIADLVVAVNAGQIKTGAPARSERVAKYNQLLRIEEELNDMGEYRGLKAFYNINK.

Residue Q166 participates in (2R)-2-phosphoglycerate binding. The active-site Proton donor is the E208. 3 residues coordinate Mg(2+): D245, E288, and D315. (2R)-2-phosphoglycerate contacts are provided by K340, R369, S370, and K391. The active-site Proton acceptor is the K340.

It belongs to the enolase family. Mg(2+) is required as a cofactor.

It is found in the cytoplasm. It localises to the secreted. The protein resides in the cell surface. It carries out the reaction (2R)-2-phosphoglycerate = phosphoenolpyruvate + H2O. It functions in the pathway carbohydrate degradation; glycolysis; pyruvate from D-glyceraldehyde 3-phosphate: step 4/5. Functionally, catalyzes the reversible conversion of 2-phosphoglycerate (2-PG) into phosphoenolpyruvate (PEP). It is essential for the degradation of carbohydrates via glycolysis. The chain is Enolase from Clostridium botulinum (strain Kyoto / Type A2).